Reading from the N-terminus, the 3907-residue chain is A-kinase anchor protein 9 (3907 aa).

The span at 1–14 shows a compositional bias: basic and acidic residues; the sequence is MEDEERQKKLEAGK. The segment at 1-57 is disordered; that stretch reads MEDEERQKKLEAGKAKLAQFRQRKAQSDGQSPSKKQKKKRKTSSSKHDVSAHHDLNI. A compositionally biased stretch (basic residues) spans 34 to 44; the sequence is KKQKKKRKTSS. Residues 45–56 are compositionally biased toward basic and acidic residues; sequence SKHDVSAHHDLN. Coiled-coil stretches lie at residues 152–902, 932–1010, 1088–1173, 1241–1268, 1324–1380, 1422–1447, and 1573–1647; these read DSPT…ELHL, EVVE…ENVQ, QPSE…QTMK, ELQDYRYEVQDFQENMHTLLNKVTEEYN, KLSS…ESTV, VKEETNIVKLLEKQYQEQLEEEVAKV, and SMDA…DNEN. Serine 153 carries the phosphoserine modification. A Phosphoserine modification is found at serine 1327. Low complexity predominate over residues 1682–1692; the sequence is STQTQNGNENQ. The disordered stretch occupies residues 1682-1713; that stretch reads STQTQNGNENQGEVEEQTFKEKELDRKPEDVP. The segment covering 1698-1711 has biased composition (basic and acidic residues); it reads QTFKEKELDRKPED. A Phosphoserine modification is found at serine 1765. Coiled coils occupy residues 1845–2443, 2532–2549, 2591–2764, 3061–3088, 3120–3466, and 3583–3685; these read NISS…VEKI, ETEMLQKKIVNLQKIVEE, QLRE…SKKA, LNCLEQRIQEQGVEYQAAMECLQKADRR, ELLE…NLNE, and SLTE…NDSL. A PKA-RII subunit binding domain region spans residues 2542 to 2555; that stretch reads NLQKIVEEKVAAAL. The interval 3377–3405 is disordered; sequence RQQMEKDRQVHRKTLQTEQEANTEGQKKM. Serine 3690, serine 3842, serine 3865, and serine 3897 each carry phosphoserine.

In terms of assembly, interacts with the regulatory region of protein kinase N (PKN), protein phosphatase 2A (PP2A), protein phosphatase 1 (PP1) and the immature non-phosphorylated form of PKC epsilon. Interacts with CIP4 and FNBP1. Interacts with chloride intracellular channel proteins CLIC1, CLIC4 and CLIC5. CSNK1D binding promotes its centrosomal subcellular location. Interacts with GM130/GOLGA2; leading to recruitment to the Golgi apparatus. Interacts with KCNQ1; targets protein kinase A (PKA) catalytic and regulatory subunits and protein phosphatase 1 (PP1), to the heterodimer KCNQ1-KCNE1. Interacts with PDE4DIP isoform 13/MMG8/SMYLE; this interaction stabilizes both proteins. In complex with PDE4DIP isoform 13, recruits CAMSAP2 to the Golgi apparatus. Forms a pericentrosomal complex with CDK5RAP2, EB1/MAPRE1 and PDE4DIP isoform 13; within this complex, MAPRE1 binding to CDK5RAP2 may be mediated by PDE4DIP. Interacts with MAPRE1 and MAPRE3. Interacts (via C-terminus) with CAMSAP2; this interaction is much stronger in the presence of PDE4DIP isoform 13/MMG8/SMYLE. Interacts with CAMSAP3. Interacts (via C-terminus) with the gamma-tubulin ring complex (gamma-TuRC), composed of gamma-tubulin, TUBGCP2, TUBGCP3, TUBGCP4, TUBGCP5 and TUBGCP6. Widely expressed. Isoform 4: Highly expressed in skeletal muscle and in pancreas.

The protein localises to the golgi apparatus. It is found in the cytoplasm. The protein resides in the cytoskeleton. Its subcellular location is the microtubule organizing center. It localises to the centrosome. Functionally, scaffolding protein that assembles several protein kinases and phosphatases on the centrosome and Golgi apparatus. Required to maintain the integrity of the Golgi apparatus. Required for microtubule nucleation at the cis-side of the Golgi apparatus. Required for association of the centrosomes with the poles of the bipolar mitotic spindle during metaphase. In complex with PDE4DIP isoform 13/MMG8/SMYLE, recruits CAMSAP2 to the Golgi apparatus and tethers non-centrosomal minus-end microtubules to the Golgi, an important step for polarized cell movement. In complex with PDE4DIP isoform 13/MMG8/SMYLE, EB1/MAPRE1 and CDK5RAP2, contributes to microtubules nucleation and extension also from the centrosome to the cell periphery. Associated with the N-methyl-D-aspartate receptor and is specifically found in the neuromuscular junction (NMJ) as well as in neuronal synapses, suggesting a role in the organization of postsynaptic specializations. This chain is A-kinase anchor protein 9 (AKAP9), found in Homo sapiens (Human).